We begin with the raw amino-acid sequence, 327 residues long: DNA-directed RNA polymerase subunit alpha (327 aa).

The tract at residues 1 to 233 (MVREKVKVST…NLFIPFLHVE (233 aa)) is alpha N-terminal domain (alpha-NTD). An alpha C-terminal domain (alpha-CTD) region spans residues 267-327 (LAFQYIFIDQ…KKILDILEKK (61 aa)).

It belongs to the RNA polymerase alpha chain family. In terms of assembly, in plastids the minimal PEP RNA polymerase catalytic core is composed of four subunits: alpha, beta, beta', and beta''. When a (nuclear-encoded) sigma factor is associated with the core the holoenzyme is formed, which can initiate transcription.

The protein resides in the plastid. It is found in the chloroplast. It carries out the reaction RNA(n) + a ribonucleoside 5'-triphosphate = RNA(n+1) + diphosphate. DNA-dependent RNA polymerase catalyzes the transcription of DNA into RNA using the four ribonucleoside triphosphates as substrates. The polypeptide is DNA-directed RNA polymerase subunit alpha (Lobularia maritima (Sweet alyssum)).